Reading from the N-terminus, the 190-residue chain is uncharacterized protein (190 aa).

This is an uncharacterized protein from Archaeoglobus fulgidus (strain ATCC 49558 / DSM 4304 / JCM 9628 / NBRC 100126 / VC-16).